A 482-amino-acid chain; its full sequence is Scarecrow-like protein 3 (482 aa).

The region spanning 45 to 479 (LKPEERGLYL…RPLYSVSAWR (435 aa)) is the GRAS domain. A leucine repeat I (LRI) region spans residues 52-115 (LYLIHLLLTC…ILKSWPGLYK (64 aa)). Residues 134–199 (RRLFFEMFPI…EGPPHLRITG (66 aa)) form a VHIID region. Positions 165–169 (VHVID) match the VHIID motif. Positions 209-241 (QMAHRLIEEAEKLDIPFQFNPVVSRLDCLNVEQ) are leucine repeat II (LRII). Positions 250-401 (LAVSSVLQLH…KMLFGEEIKN (152 aa)) are PFYRE. The tract at residues 302–324 (ENDMSNNNGYSPSGDSASSLPLP) is disordered. Polar residues predominate over residues 305 to 324 (MSNNNGYSPSGDSASSLPLP). The interval 404–479 (SCEGFERRER…RPLYSVSAWR (76 aa)) is SAW.

The protein belongs to the GRAS family. In terms of assembly, binds to zinc finger proteins MGP/IDD3, IDD4, IDD5, BIB/IDD9 and JKD/IDD10. In terms of tissue distribution, expressed in seedlings, root epidermis, leaves, flowers and siliques.

It is found in the nucleus. Its function is as follows. Probable transcription factor involved in plant development. This is Scarecrow-like protein 3 from Arabidopsis thaliana (Mouse-ear cress).